Reading from the N-terminus, the 351-residue chain is c-di-GMP synthase (351 aa).

The protein belongs to the CD-NTase family. E05 subfamily.

The catalysed reaction is 2 GTP = 3',3'-c-di-GMP + 2 diphosphate. Its function is as follows. Cyclic nucleotide synthase (second messenger synthase) of a CBASS antivirus system. CBASS (cyclic oligonucleotide-based antiphage signaling system) provides immunity against bacteriophage. The CD-NTase protein synthesizes cyclic nucleotides in response to infection; these serve as specific second messenger signals. The signals activate a diverse range of effectors, leading to bacterial cell death and thus abortive phage infection. A type I-D(GG) CBASS system. Cyclic dinucleotide synthase that catalyzes the synthesis of c-di-GMP, has no activity with other NTP substrates. The polypeptide is c-di-GMP synthase (cdnE) (Capnocytophaga granulosa (strain ATCC 51502 / DSM 11449 / JCM 8566 / LMG 16022 / NCTC 12948 / B0611)).